The following is a 592-amino-acid chain: Threonine--tRNA ligase (592 aa).

The tract at residues 193–488 (DHRKLGPALG…LIEHYGGAFP (296 aa)) is catalytic. Zn(2+) is bound by residues Cys-284, His-335, and His-465.

The protein belongs to the class-II aminoacyl-tRNA synthetase family. As to quaternary structure, homodimer. It depends on Zn(2+) as a cofactor.

It is found in the cytoplasm. It carries out the reaction tRNA(Thr) + L-threonine + ATP = L-threonyl-tRNA(Thr) + AMP + diphosphate + H(+). In terms of biological role, catalyzes the attachment of threonine to tRNA(Thr) in a two-step reaction: L-threonine is first activated by ATP to form Thr-AMP and then transferred to the acceptor end of tRNA(Thr). Also edits incorrectly charged L-seryl-tRNA(Thr). This Treponema pallidum (strain Nichols) protein is Threonine--tRNA ligase.